Here is a 153-residue protein sequence, read N- to C-terminus: NAD(P)H-quinone oxidoreductase subunit N (153 aa).

It belongs to the complex I NdhN subunit family. In terms of assembly, NDH-1 can be composed of about 15 different subunits; different subcomplexes with different compositions have been identified which probably have different functions.

Its subcellular location is the cellular thylakoid membrane. The enzyme catalyses a plastoquinone + NADH + (n+1) H(+)(in) = a plastoquinol + NAD(+) + n H(+)(out). The catalysed reaction is a plastoquinone + NADPH + (n+1) H(+)(in) = a plastoquinol + NADP(+) + n H(+)(out). In terms of biological role, NDH-1 shuttles electrons from an unknown electron donor, via FMN and iron-sulfur (Fe-S) centers, to quinones in the respiratory and/or the photosynthetic chain. The immediate electron acceptor for the enzyme in this species is believed to be plastoquinone. Couples the redox reaction to proton translocation, and thus conserves the redox energy in a proton gradient. Cyanobacterial NDH-1 also plays a role in inorganic carbon-concentration. The sequence is that of NAD(P)H-quinone oxidoreductase subunit N from Parasynechococcus marenigrum (strain WH8102).